A 658-amino-acid polypeptide reads, in one-letter code: Threonine--tRNA ligase (658 aa).

Positions 1 to 64 (MSCSVSLSFP…GQSGQIEIIT (64 aa)) constitute a TGS domain. The interval 246-549 (DHRRLGREMD…LIENFAGHMP (304 aa)) is catalytic. Zn(2+)-binding residues include C343, H394, and H526.

Belongs to the class-II aminoacyl-tRNA synthetase family. In terms of assembly, homodimer. Zn(2+) is required as a cofactor.

It localises to the cytoplasm. The enzyme catalyses tRNA(Thr) + L-threonine + ATP = L-threonyl-tRNA(Thr) + AMP + diphosphate + H(+). Catalyzes the attachment of threonine to tRNA(Thr) in a two-step reaction: L-threonine is first activated by ATP to form Thr-AMP and then transferred to the acceptor end of tRNA(Thr). Also edits incorrectly charged L-seryl-tRNA(Thr). In Bartonella quintana (strain Toulouse) (Rochalimaea quintana), this protein is Threonine--tRNA ligase.